The following is a 446-amino-acid chain: Phosphoglucosamine mutase (446 aa).

The active-site Phosphoserine intermediate is the Ser-102. Residues Ser-102, Asp-241, Asp-243, and Asp-245 each contribute to the Mg(2+) site. Ser-102 carries the phosphoserine modification.

Belongs to the phosphohexose mutase family. Mg(2+) is required as a cofactor. Activated by phosphorylation.

The catalysed reaction is alpha-D-glucosamine 1-phosphate = D-glucosamine 6-phosphate. Functionally, catalyzes the conversion of glucosamine-6-phosphate to glucosamine-1-phosphate. The chain is Phosphoglucosamine mutase from Idiomarina loihiensis (strain ATCC BAA-735 / DSM 15497 / L2-TR).